The primary structure comprises 258 residues: Pimeloyl-[acyl-carrier protein] methyl ester esterase (258 aa).

The 226-residue stretch at L16–H241 folds into the AB hydrolase-1 domain. Substrate is bound by residues W22, S82 to M83, and F143 to Q147. The active-site Nucleophile is S82. Catalysis depends on residues D207 and H235. H235 provides a ligand contact to substrate.

Belongs to the AB hydrolase superfamily. Carboxylesterase BioH family. In terms of assembly, monomer.

Its subcellular location is the cytoplasm. It catalyses the reaction 6-carboxyhexanoyl-[ACP] methyl ester + H2O = 6-carboxyhexanoyl-[ACP] + methanol + H(+). The protein operates within cofactor biosynthesis; biotin biosynthesis. Functionally, the physiological role of BioH is to remove the methyl group introduced by BioC when the pimeloyl moiety is complete. It allows to synthesize pimeloyl-ACP via the fatty acid synthetic pathway through the hydrolysis of the ester bonds of pimeloyl-ACP esters. This chain is Pimeloyl-[acyl-carrier protein] methyl ester esterase, found in Yersinia enterocolitica serotype O:8 / biotype 1B (strain NCTC 13174 / 8081).